Reading from the N-terminus, the 163-residue chain is Nucleotide-binding protein RHA1_ro01989 (163 aa).

Belongs to the YajQ family.

Its function is as follows. Nucleotide-binding protein. The polypeptide is Nucleotide-binding protein RHA1_ro01989 (Rhodococcus jostii (strain RHA1)).